Reading from the N-terminus, the 307-residue chain is Glycine--tRNA ligase alpha subunit (307 aa).

Belongs to the class-II aminoacyl-tRNA synthetase family. In terms of assembly, tetramer of two alpha and two beta subunits.

Its subcellular location is the cytoplasm. The catalysed reaction is tRNA(Gly) + glycine + ATP = glycyl-tRNA(Gly) + AMP + diphosphate. The protein is Glycine--tRNA ligase alpha subunit (glyQ) of Xylella fastidiosa (strain 9a5c).